Reading from the N-terminus, the 119-residue chain is Immunoglobulin heavy variable 3-72 (119 aa).

The signal sequence occupies residues 1-19; that stretch reads MEFGLSWVFLVVILQGVQC. A framework-1 region spans residues 20-44; it reads EVQLVESGGGLVQPGGSLRLSCAAS. Positions 20–119 constitute an Ig-like domain; sequence EVQLVESGGG…EDTAVYYCAR (100 aa). Residues Cys41 and Cys117 are joined by a disulfide bond. The complementarity-determining-1 stretch occupies residues 45–52; it reads GFTFSDHY. A framework-2 region spans residues 53–69; sequence MDWVRQAPGKGLEWVGR. Residues 70-79 form a complementarity-determining-2 region; the sequence is TRNKANSYTT. The interval 80–117 is framework-3; sequence EYAASVKGRFTISRDDSKNSLYLQMNSLKTEDTAVYYC. Positions 118–119 are complementarity-determining-3; it reads AR.

Immunoglobulins are composed of two identical heavy chains and two identical light chains; disulfide-linked.

It is found in the secreted. The protein localises to the cell membrane. Its function is as follows. V region of the variable domain of immunoglobulin heavy chains that participates in the antigen recognition. Immunoglobulins, also known as antibodies, are membrane-bound or secreted glycoproteins produced by B lymphocytes. In the recognition phase of humoral immunity, the membrane-bound immunoglobulins serve as receptors which, upon binding of a specific antigen, trigger the clonal expansion and differentiation of B lymphocytes into immunoglobulins-secreting plasma cells. Secreted immunoglobulins mediate the effector phase of humoral immunity, which results in the elimination of bound antigens. The antigen binding site is formed by the variable domain of one heavy chain, together with that of its associated light chain. Thus, each immunoglobulin has two antigen binding sites with remarkable affinity for a particular antigen. The variable domains are assembled by a process called V-(D)-J rearrangement and can then be subjected to somatic hypermutations which, after exposure to antigen and selection, allow affinity maturation for a particular antigen. The chain is Immunoglobulin heavy variable 3-72 from Homo sapiens (Human).